Reading from the N-terminus, the 725-residue chain is Dipeptidyl-peptidase 5 (725 aa).

An N-terminal signal peptide occupies residues 1 to 18; sequence MGALRWLSIAATASTALA. 6 N-linked (GlcNAc...) asparagine glycosylation sites follow: asparagine 75, asparagine 96, asparagine 153, asparagine 258, asparagine 383, and asparagine 453. Residue serine 563 is the Charge relay system of the active site. N-linked (GlcNAc...) asparagine glycosylation is present at asparagine 610. Residues aspartate 646 and histidine 678 each act as charge relay system in the active site.

It belongs to the peptidase S9C family.

Its subcellular location is the secreted. The protein is Dipeptidyl-peptidase 5 of Aspergillus oryzae (strain ATCC 42149 / RIB 40) (Yellow koji mold).